Reading from the N-terminus, the 450-residue chain is UDP-N-acetylmuramoylalanine--D-glutamate ligase (450 aa).

119-125 (GSNGKTT) contacts ATP.

The protein belongs to the MurCDEF family.

It localises to the cytoplasm. It carries out the reaction UDP-N-acetyl-alpha-D-muramoyl-L-alanine + D-glutamate + ATP = UDP-N-acetyl-alpha-D-muramoyl-L-alanyl-D-glutamate + ADP + phosphate + H(+). The protein operates within cell wall biogenesis; peptidoglycan biosynthesis. Cell wall formation. Catalyzes the addition of glutamate to the nucleotide precursor UDP-N-acetylmuramoyl-L-alanine (UMA). The protein is UDP-N-acetylmuramoylalanine--D-glutamate ligase of Streptococcus pneumoniae (strain Taiwan19F-14).